The following is a 234-amino-acid chain: Acetylxylan esterase 2 (234 aa).

The first 17 residues, 1–17, serve as a signal peptide directing secretion; the sequence is MHSKFFAASLLGLGAAA. Positions 18–27 are excised as a propeptide; sequence IPLEGVMEKR. 2 disulfide bridges follow: Cys-29–Cys-106 and Cys-73–Cys-79. The active site involves Ser-117. Cystine bridges form between Cys-128-Cys-188, Cys-174-Cys-206, and Cys-198-Cys-205. Residue Asp-202 is part of the active site. Residue Asn-207 is glycosylated (N-linked (GlcNAc...) asparagine). The active site involves His-214.

Belongs to the cutinase family. Acetylxylan esterase subfamily. Monomer.

The protein resides in the secreted. It carries out the reaction Deacetylation of xylans and xylo-oligosaccharides.. It participates in glycan degradation; xylan degradation. In terms of biological role, degrades acetylated xylans by cleaving acetyl side groups from the hetero-xylan backbone. This Talaromyces purpureogenus (Soft rot fungus) protein is Acetylxylan esterase 2 (axe-2).